The chain runs to 488 residues: MDLRALIGVIEIPDLKKFLPEFILLLLAFILFTLELFIKGKERRLVLNVVSYVGYFSVLMSLLIPWMYKGDTFYGNFTNDPLAVTVKIFAVLITLAILPFASSYFSAKKSFYGEFYYILAFTLLGVFVLASTYNLIILYVALELVSVGFYILTALLRGSTEAKEGAFKYLILGGLSIALASYGAAFMYIYSGSLDLREILTYQGKDIHYLVLGLVFFLIGLAVKIGAVPFHYWVPDAYQGAPTPVTALMASVGKLAFFIPLVRVMPLVQEKFSLVWTITVGVIAALTMLYGNLVALVQKDVKRLLAYSSIAHSGYIMAGAAVAKVIGMKAVIYFLVAYAVMSAGAFLVLALMEKNPEWQNYMENFYGLRFNAPYIAFAFFVYMVALLGVPPTVGFVGKALVFMALSFDKLWWLAFIMILSAAISTGYYIRLVVVMYMHEREKEIRSAPSHLGEKFSLFALTLASVLLGVLPSLVWFLIKQSAENLFTG.

The next 14 helical transmembrane spans lie at 18 to 38 (FLPE…ELFI), 45 to 65 (LVLN…LLIP), 81 to 101 (PLAV…LPFA), 110 to 130 (SFYG…FVLA), 135 to 155 (LIIL…LTAL), 169 to 189 (YLIL…FMYI), 210 to 230 (LVLG…AVPF), 242 to 262 (PTPV…IPLV), 274 to 294 (LVWT…GNLV), 308 to 328 (SSIA…VIGM), 331 to 351 (VIYF…VLAL), 375 to 395 (IAFA…TVGF), 412 to 434 (WLAF…LVVV), and 458 to 478 (FALT…WFLI).

It belongs to the complex I subunit 2 family. NDH-1 is composed of 14 different subunits. Subunits NuoA, H, J, K, L, M, N constitute the membrane sector of the complex.

Its subcellular location is the cell inner membrane. The enzyme catalyses a quinone + NADH + 5 H(+)(in) = a quinol + NAD(+) + 4 H(+)(out). Functionally, NDH-1 shuttles electrons from NADH, via FMN and iron-sulfur (Fe-S) centers, to quinones in the respiratory chain. The immediate electron acceptor for the enzyme in this species is believed to be ubiquinone. Couples the redox reaction to proton translocation (for every two electrons transferred, four hydrogen ions are translocated across the cytoplasmic membrane), and thus conserves the redox energy in a proton gradient. In Aquifex aeolicus (strain VF5), this protein is NADH-quinone oxidoreductase subunit N 2.